Consider the following 313-residue polypeptide: CRISPR-associated endonuclease Cas1 1 (313 aa).

Residues E144, H211, and D224 each coordinate Mn(2+). The disordered stretch occupies residues 288–313 (PPLDAPEAVDPVIPPEEPSGDDGHRG).

This sequence belongs to the CRISPR-associated endonuclease Cas1 family. In terms of assembly, homodimer, forms a heterotetramer with a Cas2 homodimer. Mg(2+) serves as cofactor. Requires Mn(2+) as cofactor.

CRISPR (clustered regularly interspaced short palindromic repeat), is an adaptive immune system that provides protection against mobile genetic elements (viruses, transposable elements and conjugative plasmids). CRISPR clusters contain spacers, sequences complementary to antecedent mobile elements, and target invading nucleic acids. CRISPR clusters are transcribed and processed into CRISPR RNA (crRNA). Acts as a dsDNA endonuclease. Involved in the integration of spacer DNA into the CRISPR cassette. The chain is CRISPR-associated endonuclease Cas1 1 from Rhodospirillum rubrum (strain ATCC 11170 / ATH 1.1.1 / DSM 467 / LMG 4362 / NCIMB 8255 / S1).